Here is a 555-residue protein sequence, read N- to C-terminus: Dihydroxy-acid dehydratase (555 aa).

Aspartate 78 serves as a coordination point for Mg(2+). Cysteine 119 is a binding site for [2Fe-2S] cluster. Positions 120 and 121 each coordinate Mg(2+). Lysine 121 carries the N6-carboxylysine modification. Cysteine 191 serves as a coordination point for [2Fe-2S] cluster. Residue glutamate 444 coordinates Mg(2+). Serine 470 functions as the Proton acceptor in the catalytic mechanism.

It belongs to the IlvD/Edd family. In terms of assembly, homodimer. It depends on [2Fe-2S] cluster as a cofactor. Mg(2+) is required as a cofactor.

It carries out the reaction (2R)-2,3-dihydroxy-3-methylbutanoate = 3-methyl-2-oxobutanoate + H2O. The enzyme catalyses (2R,3R)-2,3-dihydroxy-3-methylpentanoate = (S)-3-methyl-2-oxopentanoate + H2O. It functions in the pathway amino-acid biosynthesis; L-isoleucine biosynthesis; L-isoleucine from 2-oxobutanoate: step 3/4. Its pathway is amino-acid biosynthesis; L-valine biosynthesis; L-valine from pyruvate: step 3/4. In terms of biological role, functions in the biosynthesis of branched-chain amino acids. Catalyzes the dehydration of (2R,3R)-2,3-dihydroxy-3-methylpentanoate (2,3-dihydroxy-3-methylvalerate) into 2-oxo-3-methylpentanoate (2-oxo-3-methylvalerate) and of (2R)-2,3-dihydroxy-3-methylbutanoate (2,3-dihydroxyisovalerate) into 2-oxo-3-methylbutanoate (2-oxoisovalerate), the penultimate precursor to L-isoleucine and L-valine, respectively. This Nitratidesulfovibrio vulgaris (strain DSM 19637 / Miyazaki F) (Desulfovibrio vulgaris) protein is Dihydroxy-acid dehydratase.